Here is a 1770-residue protein sequence, read N- to C-terminus: Vitellogenin (1770 aa).

A signal peptide spans 1-16; it reads MLLLLTLLLFAGTVAA. One can recognise a Vitellogenin domain in the interval 22-809; sequence WQVGNEYTYL…SEDSVIPRIL (788 aa). Cys-178 and Cys-222 are joined by a disulfide. N-linked (GlcNAc...) asparagine glycosylation is present at Asn-296. A disordered region spans residues 373–394; the sequence is SSSSSISSSEENDFWQPKPTLE. N-linked (GlcNAc...) asparagine glycosylation occurs at Asn-1067. A VWFD domain is found at 1442–1635; sequence TSCMLDKTRA…SYALISNQCE (194 aa). Disulfide bonds link Cys-1444–Cys-1598 and Cys-1466–Cys-1634.

Accumulates in the hemolymph. Represents up to 70% of the queen's hemolymph proteins. During the first week of the worker adult life, when it becomes a nurse bee and performs brood-rearing tasks, the vitellogenin titer increases and may account for up to 40% of the total hemolymph proteins.

The protein resides in the secreted. Its function is as follows. Precursor of the egg-yolk proteins that are sources of nutrients during embryonic development. Involved in the differentiation of honeybee larvae into queens. This chain is Vitellogenin (Vg), found in Apis mellifera (Honeybee).